Here is a 1272-residue protein sequence, read N- to C-terminus: MAVIKKGARRKDVKEPKKRSAKIKKATFDANKKKEVGISDLTLLSKISDESINENLKKRFKNGIIYTYIGHVLISVNPFRDLGIYTNAVLESYKGKNRLEVPPHVFAIAESMYYNLKSYNENQCVIISGESGAGKTEAAKRIMQYIAAASNSHSESIGKIKDMVLATNPLLESFGCAKTLRNNNSSRHGKYLEIKFNSQFEPCAGNITNYLLEKQRVVGQIKNERNFHIFYQFTKGASDTYKQMFGVQMPEQYIYTAAAGCTTADTIDDVKDYEGTLEAMRTIGLVQEEQDQIFRMLAAILWIGNISFIENEEGNAQVGDTSVTDFVAYLLQVDASLLVKCLVERIMQTSHGMKRGSVYHVPLNPVQATAVRDALAKAIYNNLFDWIVDRVNVSLQAFPGADKSIGILDIYGFEIFEHNSFEQICINYVNEKLQQIFIQLTLKAEQETYEREKIKWTPIKYFDNKVVCDLIEAKNPPGILAAMNDSIATAHADSNAADQAFAQRLNLFNSNPYFELRANKFVIKHYAGDVTYDINGITDKNKDQLQKDLIELIGTTTNTFLSTIFPDDVDKDSKRRPPTAGDKIIKSANELVETLSKAEPSYIRTIKPNQTKSPNDYDDHQVLHQVKYLGLQENVRIRRAGFAYRQTFEKFVERFYLLSPDCSYAGDYTWDGDTLEAVKLILRDAMIPEKEFQLGVTSVFIKTPESLFALEDMRDKYWYNMAARIQRAWRRFLQRRIDAAIKIQRTIREKKGGNKYVKLRDYGTKLLAGKKERRSMSLLGYRAFMGDYLSCNESKTKGSYIRRQVGIKDKVVFSIKGECLHSKFGRSAQRLKKVFILTKKTFYIIGQTREQNAMKYTQDYKIDVGKIKQVSLTNLQDDWMGVILVNSTQSDPLINTPFKTELMTRLKKLNEKIMIKVGPTIEYHKQPNKLHTVRSKISDSAPKYGDIYKSSTIYVRRGHPANSKSNKKPKNPGGLSGKPIKSKKSKHKSTHKHTHSHRSHRDAAKKQPLPSQKPVNPLSLAATAAQAAYNPKPDKTVPIKSSAIPAAKVSSKHSSKPSSKEKVAVKKASSSHKSSSAKQNQVSMPPSKGVEKNKEPLKETTATATANIPIPPPPPPMGQPKDPKFEAAYDFPGSGSSSELPLKKGDIVFISRDEPSGWSLAKLLDGSKEGWVPTAYMTPYKDTRNTVPVAATGAVNDVTNQKSSQIDNTISSAQEGVQFGSATVGPTSDNQSNPVGTFSDGLASALAARANKMRAESADDDDNDDGDDDDDW.

The interval 1–20 (MAVIKKGARRKDVKEPKKRS) is disordered. Residues 36-715 (VGISDLTLLS…SLFALEDMRD (680 aa)) form the Myosin motor domain. Residue 129–136 (GESGAGKT) coordinates ATP. The residue at position 357 (Ser-357) is a Phosphoserine. The actin-binding stretch occupies residues 588 to 610 (ANELVETLSKAEPSYIRTIKPNQ). IQ domains follow at residues 719–739 (YNMAARIQRAWRRFLQRRIDA) and 740–765 (AIKIQRTIREKKGGNKYVKLRDYGTK). Positions 771-961 (KERRSMSLLG…TIYVRRGHPA (191 aa)) constitute a TH1 domain. Disordered stretches follow at residues 951-1015 (STIY…QKPV), 1029-1141 (YNPK…SELP), and 1217-1272 (VQFG…DDDW). A compositionally biased stretch (basic residues) spans 980–1000 (IKSKKSKHKSTHKHTHSHRSH). A compositionally biased stretch (low complexity) spans 1066–1078 (KKASSSHKSSSAK). The span at 1089-1098 (GVEKNKEPLK) shows a compositional bias: basic and acidic residues. Over residues 1109 to 1118 (PIPPPPPPMG) the composition is skewed to pro residues. The SH3 domain maps to 1120-1182 (PKDPKFEAAY…PTAYMTPYKD (63 aa)). The span at 1217–1236 (VQFGSATVGPTSDNQSNPVG) shows a compositional bias: polar residues. The span at 1258-1272 (ADDDDNDDGDDDDDW) shows a compositional bias: acidic residues.

This sequence belongs to the TRAFAC class myosin-kinesin ATPase superfamily. Myosin family. In terms of assembly, interacts (via myosin motor domain) with SHE4; this interaction is important for proper localization and may regulate the interaction of the motor domain with actin. Interacts (via SH3 domain) with VRP1; this interaction is required for localization to sites of polarized growth and may regulate the interaction of the tail domain with actin. Interacts (via SH3 domain) with PAN1; this interaction is important for late stages of endocytopsis. Interacts (via SH3 domain) with BBC1 and LAS17. Interacts (via C-terminal acidic tail) with ARC19 and ARC40; ARC19 and ARC40 are Arp2/3 complex subunits. Post-translationally, phosphorylation of the TEDS site (Ser-357) is required for the polarization of the actin cytoskeleton and for ligand-induced, but not for constitutive internalization of STE2. Phosphorylation probably activates the myosin-I ATPase. Ser-357 is phosphorylated by CLA4 and STE20 in vitro.

The protein resides in the cytoplasm. The protein localises to the cytoskeleton. Its subcellular location is the actin patch. Its function is as follows. One of two redundant type-I myosins implicated in the organization of the actin cytoskeleton. Required for proper actin cytoskeleton polarization and for the internalization step in endocytosis. At the cell cortex, assembles in patch-like structures together with proteins from the actin-polymerizing machinery and promotes actin assembly. Functions redundantly with LAS17 as actin nucleation-promoting factor (NPF) for the Arp2/3 complex. Motor domain phosphorylation by PAK kinases CLA4 and STE20 promotes CDC42-regulated actin assembly. Functions together with the NPF PAN1 in late stages of endocytosis. Motor domain phosphorylation by PDK1 kinases PKH1 and PKH2, and by SGK kinases YPK1 and YPK2, promotes ligand-induced, but not constitutive endocytosis of the G protein-coupled receptor STE2. The chain is Myosin-3 (MYO3) from Saccharomyces cerevisiae (strain ATCC 204508 / S288c) (Baker's yeast).